Here is a 538-residue protein sequence, read N- to C-terminus: MTDLNKVINELGELGIYDVKEIVHNPSYEQLFEEETKPGLAGFEKGVVTTSGAVAVDTGIFTGRSPKDKYIVLDEKTKNTVWWTSDAAKNDNKPMNQETWQSLKGLVTKQLSGKRLFVIDAFCGANPDTRLAVRIVTEVAWQAHFVKNMFIRPSDEELQNFKPDFTVMNGSKVTNPNWKEQGLNSENFVAFNITEGVQLIGGTWYGGEMKKGMFSMMNYFLPLKGIASMHCSANVGKDGDVAIFFGLSGTGKTTLSTDPKRQLIGDDEHGWDDDGVFNYEGGCYAKTIKLSAESEPDIYRAIRRDALLENVVVREDGSVDFDDGSKTENTRVSYPIYHIDNIVKPVSKAGHATKVIFLTADAFGVLPPVSKLTPEQTKYYFLSGFTAKLAGTERGITEPTPTFSACFGAAFLSLHPTQYAEVLVKRMKDSGAEAYLVNTGWNGTGKRISIKDTRGIIDAILDGSIESAEMGSLPIFDLAIPKALPGVDPAILDPRDTYADKAQWQAKAEDLASRFVKNFEKYATNEEGKALIAAGPKA.

Substrate-binding residues include R64, Y205, and K211. Residues K211, H230, and 246–254 (GLSGTGKTT) contribute to the ATP site. The Mn(2+) site is built by K211 and H230. D267 provides a ligand contact to Mn(2+). ATP-binding positions include E295, R331, 447–448 (RI), and T453. R331 contributes to the substrate binding site.

It belongs to the phosphoenolpyruvate carboxykinase (ATP) family. Monomer. Mn(2+) is required as a cofactor.

The protein resides in the cytoplasm. It carries out the reaction oxaloacetate + ATP = phosphoenolpyruvate + ADP + CO2. Its pathway is carbohydrate biosynthesis; gluconeogenesis. In terms of biological role, involved in the gluconeogenesis. Catalyzes the conversion of oxaloacetate (OAA) to phosphoenolpyruvate (PEP) through direct phosphoryl transfer between the nucleoside triphosphate and OAA. The polypeptide is Phosphoenolpyruvate carboxykinase (ATP) (Histophilus somni (strain 129Pt) (Haemophilus somnus)).